The sequence spans 231 residues: eRF1 methyltransferase catalytic subunit mtq2 (231 aa).

Residues 54-58 (GCGSG), Asp-80, and Asn-130 each bind S-adenosyl-L-methionine. 130 to 133 (NPPY) serves as a coordination point for substrate.

Belongs to the eukaryotic/archaeal PrmC-related family. Heterodimer of mtq2-trm112. mtq2 is the catalytic subunit carrying the catalytic and the S-adenosyl L-methionine binding sites.

It localises to the cytoplasm. The protein localises to the nucleus. It carries out the reaction L-glutaminyl-[peptide chain release factor] + S-adenosyl-L-methionine = N(5)-methyl-L-glutaminyl-[peptide chain release factor] + S-adenosyl-L-homocysteine + H(+). Functionally, methylates eRF1 on 'Gln-182' using S-adenosyl L-methionine as methyl donor. eRF1 needs to be complexed to eRF3 in its GTP-bound form to be efficiently methylated. The chain is eRF1 methyltransferase catalytic subunit mtq2 (mtq2) from Schizosaccharomyces pombe (strain 972 / ATCC 24843) (Fission yeast).